Here is a 223-residue protein sequence, read N- to C-terminus: Putative 3-methyladenine DNA glycosylase (223 aa).

The protein belongs to the DNA glycosylase MPG family.

The chain is Putative 3-methyladenine DNA glycosylase from Pseudomonas savastanoi pv. phaseolicola (strain 1448A / Race 6) (Pseudomonas syringae pv. phaseolicola (strain 1448A / Race 6)).